The primary structure comprises 287 residues: tRNA-cytidine(32) 2-sulfurtransferase (287 aa).

Residues 58–63 carry the PP-loop motif motif; that stretch reads SGGKDS. Cys133, Cys136, and Cys224 together coordinate [4Fe-4S] cluster.

It belongs to the TtcA family. In terms of assembly, homodimer. It depends on Mg(2+) as a cofactor. [4Fe-4S] cluster serves as cofactor.

Its subcellular location is the cytoplasm. It catalyses the reaction cytidine(32) in tRNA + S-sulfanyl-L-cysteinyl-[cysteine desulfurase] + AH2 + ATP = 2-thiocytidine(32) in tRNA + L-cysteinyl-[cysteine desulfurase] + A + AMP + diphosphate + H(+). It participates in tRNA modification. Its function is as follows. Catalyzes the ATP-dependent 2-thiolation of cytidine in position 32 of tRNA, to form 2-thiocytidine (s(2)C32). The sulfur atoms are provided by the cysteine/cysteine desulfurase (IscS) system. This chain is tRNA-cytidine(32) 2-sulfurtransferase, found in Dinoroseobacter shibae (strain DSM 16493 / NCIMB 14021 / DFL 12).